Reading from the N-terminus, the 470-residue chain is Pyruvate kinase I (470 aa).

Residue arginine 32 participates in substrate binding. Residues asparagine 34, serine 36, aspartate 66, and threonine 67 each contribute to the K(+) site. 34 to 37 (NFSH) lines the ATP pocket. 2 residues coordinate ATP: arginine 73 and lysine 156. Mg(2+) is bound at residue glutamate 222. Substrate contacts are provided by glycine 245, aspartate 246, and threonine 278. Aspartate 246 provides a ligand contact to Mg(2+).

Belongs to the pyruvate kinase family. Homotetramer. Mg(2+) serves as cofactor. Requires K(+) as cofactor.

The enzyme catalyses pyruvate + ATP = phosphoenolpyruvate + ADP + H(+). It functions in the pathway carbohydrate degradation; glycolysis; pyruvate from D-glyceraldehyde 3-phosphate: step 5/5. In Salmonella typhi, this protein is Pyruvate kinase I (pykF).